The chain runs to 609 residues: ATP-dependent lipid A-core flippase (609 aa).

6 helical membrane-spanning segments follow: residues 47–67 (LLAAIGSIFFSAADASMIYLI), 88–108 (ILMLMGVGMVGLLALRSVGSF), 167–187 (AIITVVQDGTFVIGLIVVMFV), 190–210 (WQLSLFLIVVGPFLGLFISII), 279–299 (VIQIIASLVLAFSLFTIAIFG), and 305–325 (GSSWLTAGSFASFFAAAAAIL). The region spanning 47–340 (LLAAIGSIFF…LTKVNVVIQK (294 aa)) is the ABC transmembrane type-1 domain. An ABC transporter domain is found at 372 to 606 (VTIKDLSFAF…GGLYTRLYQS (235 aa)). Residue 404-411 (GKSGSGKT) participates in ATP binding.

The protein belongs to the ABC transporter superfamily. Lipid exporter (TC 3.A.1.106) family. As to quaternary structure, homodimer.

Its subcellular location is the cell inner membrane. It carries out the reaction ATP + H2O + lipid A-core oligosaccharideSide 1 = ADP + phosphate + lipid A-core oligosaccharideSide 2.. Functionally, involved in lipopolysaccharide (LPS) biosynthesis. Translocates lipid A-core from the inner to the outer leaflet of the inner membrane. Transmembrane domains (TMD) form a pore in the inner membrane and the ATP-binding domain (NBD) is responsible for energy generation. In Francisella tularensis subsp. tularensis (strain FSC 198), this protein is ATP-dependent lipid A-core flippase.